The following is a 309-amino-acid chain: Coproporphyrin III ferrochelatase (309 aa).

Residues Y12, R29, 45-46, S53, and Y124 each bind Fe-coproporphyrin III; that span reads RY. Fe(2+) is bound by residues H182 and E263.

This sequence belongs to the ferrochelatase family.

The protein resides in the cytoplasm. It catalyses the reaction Fe-coproporphyrin III + 2 H(+) = coproporphyrin III + Fe(2+). It functions in the pathway porphyrin-containing compound metabolism; protoheme biosynthesis. In terms of biological role, involved in coproporphyrin-dependent heme b biosynthesis. Catalyzes the insertion of ferrous iron into coproporphyrin III to form Fe-coproporphyrin III. In Listeria innocua serovar 6a (strain ATCC BAA-680 / CLIP 11262), this protein is Coproporphyrin III ferrochelatase.